Consider the following 147-residue polypeptide: MVHFTTEEKAAVASLWAKVNVEVVGGESLARLLIVYPWTQRFFDSFGNLYSESAIMGNPKVKAHGRKVLNSFGNAIEHMDDLKGTFADLSELHCDKLHVDPENFRLLGNMILIVLATHFSKEFTPQMQASWQKLTNAVANALAHKYH.

A Globin domain is found at H3–H147. Heme b-binding residues include H64 and H93.

Belongs to the globin family. As to expression, red blood cells.

Its function is as follows. Hemoglobin epsilon chain is a beta-type chain found in early embryos. This chain is Hemoglobin subunit epsilon-4 (HBE4), found in Bos taurus (Bovine).